A 678-amino-acid polypeptide reads, in one-letter code: Catalase (678 aa).

A compositionally biased stretch (basic and acidic residues) spans 1–26 (MSNEREMQNKKDQQLESFRVEDEGKK). A disordered region spans residues 1–32 (MSNEREMQNKKDQQLESFRVEDEGKKLTTNQG). Residues His-75 and Asn-148 contribute to the active site. Tyr-362 contributes to the heme binding site.

This sequence belongs to the catalase family. HPII subfamily. It depends on heme as a cofactor.

It localises to the cytoplasm. The enzyme catalyses 2 H2O2 = O2 + 2 H2O. Its function is as follows. Decomposes hydrogen peroxide into water and oxygen; serves to protect cells from the toxic effects of hydrogen peroxide. The chain is Catalase (katE) from Alkalihalophilus pseudofirmus (strain ATCC BAA-2126 / JCM 17055 / OF4) (Bacillus pseudofirmus).